The following is a 393-amino-acid chain: Pectate lyase A (393 aa).

A signal peptide spans 1-32 (MMNKASGRSFTRSSKYLLATLIAGMMASGVSA). Ca(2+) is bound by residues Glu-174, Asp-176, Asp-216, and Asp-220. Arg-273 is an active-site residue. Residues Cys-330 and Cys-358 are joined by a disulfide bond.

This sequence belongs to the polysaccharide lyase 1 family. PLADES subfamily. Requires Ca(2+) as cofactor.

The protein resides in the secreted. The enzyme catalyses Eliminative cleavage of (1-&gt;4)-alpha-D-galacturonan to give oligosaccharides with 4-deoxy-alpha-D-galact-4-enuronosyl groups at their non-reducing ends.. It functions in the pathway glycan metabolism; pectin degradation; 2-dehydro-3-deoxy-D-gluconate from pectin: step 2/5. Functionally, involved in maceration and soft-rotting of plant tissue. The polypeptide is Pectate lyase A (pelA) (Dickeya chrysanthemi (Pectobacterium chrysanthemi)).